The chain runs to 100 residues: Osteocalcin (100 aa).

An N-terminal signal peptide occupies residues 1-23; that stretch reads MRALTLLALLALAALCIAGQAGA. Residues 24–51 constitute a propeptide that is removed on maturation; the sequence is KPSGAESSKGAAFVSKQEGSEVVKRPRR. The Gla domain occupies 52-98; it reads YLYQWLGAPVPYPDPLEPRREVCELNPDCDELADHIGFQEAYRRFYG. 4 residues coordinate Ca(2+): Glu-68, Glu-72, Glu-75, and Asp-81. 4-carboxyglutamate; partial is present on Glu-68. 2 positions are modified to 4-carboxyglutamate: Glu-72 and Glu-75. Cys-74 and Cys-80 are joined by a disulfide.

This sequence belongs to the osteocalcin/matrix Gla protein family. Post-translationally, gamma-carboxyglutamate residues are formed by vitamin K dependent carboxylation by GGCX. These residues are essential for the binding of calcium. Decarboxylation promotes the hormone activity.

The protein localises to the secreted. Bone protein that constitutes 1-2% of the total bone protein, and which acts as a negative regulator of bone formation. Functions to limit bone formation without impairing bone resorption or mineralization. It binds strongly to apatite and calcium. In terms of biological role, the uncarboxylated form acts as a hormone secreted by osteoblasts, which regulates different cellular processes, such as energy metabolism, male fertility and brain development. Regulates of energy metabolism by acting as a hormone favoring pancreatic beta-cell proliferation, insulin secretion and sensitivity and energy expenditure. Uncarboxylated osteocalcin hormone also promotes testosterone production in the testes: acts as a ligand for G protein-coupled receptor GPRC6A at the surface of Leydig cells, initiating a signaling response that promotes the expression of enzymes required for testosterone synthesis in a CREB-dependent manner. Also acts as a regulator of brain development: osteocalcin hormone crosses the blood-brain barrier and acts as a ligand for GPR158 on neurons, initiating a signaling response that prevents neuronal apoptosis in the hippocampus, favors the synthesis of all monoamine neurotransmitters and inhibits that of gamma-aminobutyric acid (GABA). Osteocalcin also crosses the placenta during pregnancy and maternal osteocalcin is required for fetal brain development. The chain is Osteocalcin (BGLAP) from Homo sapiens (Human).